We begin with the raw amino-acid sequence, 295 residues long: NAD kinase (295 aa).

Residue D73 is the Proton acceptor of the active site. Residues 73–74, R78, 146–147, K157, R174, D176, and 187–192 each bind NAD(+); these read DG, NE, and TAYSLS.

This sequence belongs to the NAD kinase family. A divalent metal cation is required as a cofactor.

Its subcellular location is the cytoplasm. The catalysed reaction is NAD(+) + ATP = ADP + NADP(+) + H(+). Functionally, involved in the regulation of the intracellular balance of NAD and NADP, and is a key enzyme in the biosynthesis of NADP. Catalyzes specifically the phosphorylation on 2'-hydroxyl of the adenosine moiety of NAD to yield NADP. This chain is NAD kinase, found in Wigglesworthia glossinidia brevipalpis.